Reading from the N-terminus, the 440-residue chain is tRNA-2-methylthio-N(6)-dimethylallyladenosine synthase (440 aa).

An MTTase N-terminal domain is found at 4–120; sequence NYVYIETFGC…LNDMVLAAER (117 aa). The [4Fe-4S] cluster site is built by cysteine 13, cysteine 49, cysteine 83, cysteine 158, cysteine 162, and cysteine 165. The 231-residue stretch at 144-374 folds into the Radical SAM core domain; that stretch reads GTARISSFVT…QALQKRTTME (231 aa). The 63-residue stretch at 377–439 folds into the TRAM domain; sequence DVLLGTRQTV…QNSLLGELLP (63 aa).

The protein belongs to the methylthiotransferase family. MiaB subfamily. As to quaternary structure, monomer. The cofactor is [4Fe-4S] cluster.

It localises to the cytoplasm. It catalyses the reaction N(6)-dimethylallyladenosine(37) in tRNA + (sulfur carrier)-SH + AH2 + 2 S-adenosyl-L-methionine = 2-methylsulfanyl-N(6)-dimethylallyladenosine(37) in tRNA + (sulfur carrier)-H + 5'-deoxyadenosine + L-methionine + A + S-adenosyl-L-homocysteine + 2 H(+). Functionally, catalyzes the methylthiolation of N6-(dimethylallyl)adenosine (i(6)A), leading to the formation of 2-methylthio-N6-(dimethylallyl)adenosine (ms(2)i(6)A) at position 37 in tRNAs that read codons beginning with uridine. The polypeptide is tRNA-2-methylthio-N(6)-dimethylallyladenosine synthase (Pelobacter propionicus (strain DSM 2379 / NBRC 103807 / OttBd1)).